The chain runs to 846 residues: Matrin-3 (846 aa).

Ser2 is subject to N-acetylserine. At Lys3 the chain carries N6-acetyllysine; alternate. Residue Lys3 forms a Glycyl lysine isopeptide (Lys-Gly) (interchain with G-Cter in SUMO2); alternate linkage. Phosphoserine occurs at positions 4, 9, 14, 22, 41, 118, and 126. Glycyl lysine isopeptide (Lys-Gly) (interchain with G-Cter in SUMO2) cross-links involve residues Lys132 and Lys146. 2 disordered regions span residues 147–174 and 187–213; these read RRRTEEGPTLSYGRDGRSATREPPYRVP and DSFDDRGPSLNPVLDYDHGSRSQESGY. The residue at position 150 (Thr150) is a Phosphothreonine. The residue at position 157 (Ser157) is a Phosphoserine. Tyr158 carries the post-translational modification Phosphotyrosine. The span at 160 to 174 shows a compositional bias: basic and acidic residues; sequence RDGRSATREPPYRVP. Ser164, Ser188, and Ser195 each carry phosphoserine. The span at 201 to 213 shows a compositional bias: basic and acidic residues; that stretch reads DYDHGSRSQESGY. Position 202 is a phosphotyrosine (Tyr202). A phosphoserine mark is found at Ser206, Ser208, and Ser211. Tyr219 carries the post-translational modification Phosphotyrosine. At Ser234 the chain carries Phosphoserine. Lys245 participates in a covalent cross-link: Glycyl lysine isopeptide (Lys-Gly) (interchain with G-Cter in SUMO2). Residue Ser264 is modified to Phosphoserine. Lys269 participates in a covalent cross-link: Glycyl lysine isopeptide (Lys-Gly) (interchain with G-Cter in SUMO2). At Ser275 the chain carries Phosphoserine. Residues 342 to 394 form a disordered region; that stretch reads PFMLQQSTNPAPGILGPPPPSFHLGGPAVGPRGNLGAGNGNLQGPRHMQKGRV. In terms of domain architecture, RRM 1 spans 398 to 473; the sequence is RVVHIMDFQR…KPVRVHLSQK (76 aa). Residues Lys478, Lys487, and Lys491 each participate in a glycyl lysine isopeptide (Lys-Gly) (interchain with G-Cter in SUMO2) cross-link. Residues 496–571 enclose the RRM 2 domain; the sequence is RVIHLSNLPH…RCVKVDLSEK (76 aa). Phosphoserine is present on residues Ser509 and Ser511. Residue Lys515 forms a Glycyl lysine isopeptide (Lys-Gly) (interchain with G-Cter in SUMO2) linkage. Lys522 is subject to N6-acetyllysine; alternate. A Glycyl lysine isopeptide (Lys-Gly) (interchain with G-Cter in SUMO2); alternate cross-link involves residue Lys522. Position 533 is a phosphoserine (Ser533). Glycyl lysine isopeptide (Lys-Gly) (interchain with G-Cter in SUMO2) cross-links involve residues Lys554 and Lys555. Lys571 carries the post-translational modification N6-acetyllysine. The interval 588–779 is disordered; it reads KKDKSRKRSY…EDYTIPDEYR (192 aa). Ser596, Ser598, Ser604, and Ser606 each carry phosphoserine. The span at 600-642 shows a compositional bias: basic and acidic residues; that stretch reads DGKESPSDKKSKTDAQKTESPAEGKEQEEKSGEDGEKDTKDDQ. Glycyl lysine isopeptide (Lys-Gly) (interchain with G-Cter in SUMO2) cross-links involve residues Lys616 and Lys629. The span at 652–664 shows a compositional bias: acidic residues; it reads ESEDELLVDEEEA. Residues Ser653, Ser670, Ser672, and Ser673 each carry the phosphoserine modification. Residues 665-675 are compositionally biased toward low complexity; that stretch reads AALLESGSSVG. Thr678 carries the post-translational modification Phosphothreonine. At Ser688 the chain carries Phosphoserine. Residues 688–703 show a composition bias toward basic and acidic residues; the sequence is SDGKKEPSDKAVKKDP. Residues 709–717 carry the Nuclear localization signal motif; it reads SKKKLKKVD. Residues Lys718 and Lys735 each participate in a glycyl lysine isopeptide (Lys-Gly) (interchain with G-Cter in SUMO2) cross-link. A Phosphothreonine modification is found at Thr740. Phosphoserine is present on residues Ser746 and Ser758. A compositionally biased stretch (basic and acidic residues) spans 766–779; that stretch reads DENKEDYTIPDEYR. Lys769 is covalently cross-linked (Glycyl lysine isopeptide (Lys-Gly) (interchain with G-Cter in SUMO2)). The segment at 800 to 831 adopts a Matrin-type zinc-finger fold; the sequence is FYCKLCSLFYTNEEVAKNTHCSSLPHYQKLKK. N6-acetyllysine; alternate is present on Lys835. A Glycyl lysine isopeptide (Lys-Gly) (interchain with G-Cter in SUMO2); alternate cross-link involves residue Lys835.

Part of a complex consisting of SFPQ, NONO and MATR3. Interacts with AGO1 and AGO2. Part of a complex composed at least of ASH2L, EMSY, HCFC1, HSPA8, CCAR2, MATR3, MKI67, RBBP5, TUBB2A, WDR5 and ZNF335; this complex may have a histone H3-specific methyltransferase activity. Interacts with TARDBP. Part of the HDP-RNP complex composed of at least HEXIM1, PRKDC, XRCC5, XRCC6, paraspeckle proteins (SFPQ, NONO, PSPC1, RBM14, and MATR3) and NEAT1 RNA. Interacts with FUS. Interacts with IGF2BP1. Interacts with IGF2BP2 and IGF2BP3. Interacts with RBPMS.

Its subcellular location is the nucleus matrix. In terms of biological role, may play a role in transcription or may interact with other nuclear matrix proteins to form the internal fibrogranular network. In association with the SFPQ-NONO heteromer may play a role in nuclear retention of defective RNAs. Plays a role in the regulation of DNA virus-mediated innate immune response by assembling into the HDP-RNP complex, a complex that serves as a platform for IRF3 phosphorylation and subsequent innate immune response activation through the cGAS-STING pathway. Binds to N6-methyladenosine (m6A)-containing mRNAs and contributes to MYC stability by binding to m6A-containing MYC mRNAs. May bind to specific miRNA hairpins. The protein is Matrin-3 (Matr3) of Mus musculus (Mouse).